We begin with the raw amino-acid sequence, 186 residues long: Ribosome-recycling factor (186 aa).

The protein belongs to the RRF family.

It is found in the cytoplasm. Its function is as follows. Responsible for the release of ribosomes from messenger RNA at the termination of protein biosynthesis. May increase the efficiency of translation by recycling ribosomes from one round of translation to another. This Chlorobium phaeobacteroides (strain DSM 266 / SMG 266 / 2430) protein is Ribosome-recycling factor.